A 61-amino-acid chain; its full sequence is Large ribosomal subunit protein eL20 (61 aa).

This sequence belongs to the eukaryotic ribosomal protein eL20 family. In terms of assembly, part of the 50S ribosomal subunit. Binds 23S rRNA.

The protein is Large ribosomal subunit protein eL20 of Methanosarcina acetivorans (strain ATCC 35395 / DSM 2834 / JCM 12185 / C2A).